The primary structure comprises 372 residues: Queuine tRNA-ribosyltransferase (372 aa).

The active-site Proton acceptor is Asp-89. Substrate contacts are provided by residues Asp-89–Phe-93, Asp-161, and Gly-232. Residues Gly-262–Ser-268 form an RNA binding region. Asp-281 (nucleophile) is an active-site residue. An RNA binding; important for wobble base 34 recognition region spans residues Thr-286–Arg-290. Cys-319, Cys-321, Cys-324, and His-351 together coordinate Zn(2+).

It belongs to the queuine tRNA-ribosyltransferase family. Homodimer. Within each dimer, one monomer is responsible for RNA recognition and catalysis, while the other monomer binds to the replacement base PreQ1. The cofactor is Zn(2+).

It catalyses the reaction 7-aminomethyl-7-carbaguanine + guanosine(34) in tRNA = 7-aminomethyl-7-carbaguanosine(34) in tRNA + guanine. Its pathway is tRNA modification; tRNA-queuosine biosynthesis. Functionally, catalyzes the base-exchange of a guanine (G) residue with the queuine precursor 7-aminomethyl-7-deazaguanine (PreQ1) at position 34 (anticodon wobble position) in tRNAs with GU(N) anticodons (tRNA-Asp, -Asn, -His and -Tyr). Catalysis occurs through a double-displacement mechanism. The nucleophile active site attacks the C1' of nucleotide 34 to detach the guanine base from the RNA, forming a covalent enzyme-RNA intermediate. The proton acceptor active site deprotonates the incoming PreQ1, allowing a nucleophilic attack on the C1' of the ribose to form the product. After dissociation, two additional enzymatic reactions on the tRNA convert PreQ1 to queuine (Q), resulting in the hypermodified nucleoside queuosine (7-(((4,5-cis-dihydroxy-2-cyclopenten-1-yl)amino)methyl)-7-deazaguanosine). This is Queuine tRNA-ribosyltransferase from Chlamydia muridarum (strain MoPn / Nigg).